Consider the following 523-residue polypeptide: Calcium-dependent protein kinase 1 (523 aa).

The interval 1–36 (MGCNQSKSANDVRGNKVNHVNSKKKNNKREDTNDGE) is disordered. Residue Gly2 is the site of N-myristoyl glycine attachment. Cys3 carries S-palmitoyl cysteine lipidation. A Protein kinase domain is found at 57–324 (YFKVRKLGSG…AEEALNSRWI (268 aa)). ATP is bound by residues 63–71 (LGSGAYGEV), Lys86, and Lys90. Ser65 carries the phosphoserine modification. Phosphoserine is present on Ser117. Residue Asp190 is the Proton acceptor of the active site. Ser216 and Ser219 each carry phosphoserine. At Thr230 the chain carries Phosphothreonine. Position 334 is a phosphoserine (Ser334). The short motif at 345 to 352 (NMRKFEGS) is the J domain autoinhibitory motif element. Residues 345-363 (NMRKFEGSQKLAQAAILFI) form a j domain region. Residues 353–363 (QKLAQAAILFI) carry the J domain interacts with the EF-hand domains motif. EF-hand domains lie at 371 to 406 (EERK…LRNF), 415 to 450 (NVEE…KQIL), 451 to 486 (FSEE…TSIS), and 487 to 520 (EKTW…ICDH). 20 residues coordinate Ca(2+): Asp384, Asn386, Asp388, Gln390, Glu395, Asp428, Asp430, Asn432, Tyr434, Glu439, Asp464, Asp466, Ser468, Lys470, Glu475, Asp498, Asn500, Asp502, Met504, and Glu509.

Belongs to the protein kinase superfamily. Ser/Thr protein kinase family. CDPK subfamily. In terms of assembly, monomer. The cofactor is Mg(2+). Post-translationally, myristoylated. Myristoylation and palmitoylation are required for the localization to the parasitophorous vacuole membrane. In terms of processing, palmitoylated. Palmitoylation increases in merozoites in response to low level of extracellular K(+) in the host blood. Myristoylation and palmitoylation are required for the localization to the parasitophorous vacuole membrane. Phosphorylation at Thr-230 may regulate CDPK1 kinase activity. Phosphorylation increases in response to an increase in intracellular Ca(2+) levels. Autophosphorylated in vitro. Autophosphorylation does not affect membrane localization in vitro.

The protein resides in the membrane. It localises to the cell membrane. The protein localises to the parasitophorous vacuole membrane. It is found in the cytoplasm. Its subcellular location is the cell projection. The protein resides in the cilium. It localises to the flagellum. The protein localises to the host cell membrane. It catalyses the reaction L-seryl-[protein] + ATP = O-phospho-L-seryl-[protein] + ADP + H(+). It carries out the reaction L-threonyl-[protein] + ATP = O-phospho-L-threonyl-[protein] + ADP + H(+). Its activity is regulated as follows. Activated by calcium. Upon calcium binding to the EF-hand domains, the C-terminus of the junction domain (J domain) undergoes a conformational change which results in the dissociation of the pseudo-substrate inhibitory motif from the catalytic domain. This, in turn may facilitate the autophosphorylation of the activation loop at Thr-230, which leads to the kinase activation. Its function is as follows. Calcium-dependent protein kinase which acts as a sensor and effector of intracellular Ca(2+) levels probably in part downstream of cGMP-activated PKG kinase. During the liver stage, involved in sporozoite motility and thus in sporozoite invasion of host hepatocytes, probably together with CDPK4 and CDPK5. In the mosquito midgut and during the last stage of male gamete exflagellation, may play a role in the rupture of the host erythrocyte membrane. In the mosquito midgut, required for the differentiation of the zygote into the ookinete by promoting the translational activation of a subset of repressed mRNAs; these mRNAs are kept repressed in the zygote by the DOZI- or CITH-containing mRNP complexes. Dispensable during the asexual blood stage. The chain is Calcium-dependent protein kinase 1 from Plasmodium berghei (strain Anka).